The following is a 177-amino-acid chain: NADH-quinone oxidoreductase subunit B (177 aa).

Residues Cys53, Cys54, Cys118, and Cys148 each coordinate [4Fe-4S] cluster.

The protein belongs to the complex I 20 kDa subunit family. In terms of assembly, NDH-1 is composed of 14 different subunits. Subunits NuoB, C, D, E, F, and G constitute the peripheral sector of the complex. The cofactor is [4Fe-4S] cluster.

Its subcellular location is the cell membrane. It carries out the reaction a quinone + NADH + 5 H(+)(in) = a quinol + NAD(+) + 4 H(+)(out). Functionally, NDH-1 shuttles electrons from NADH, via FMN and iron-sulfur (Fe-S) centers, to quinones in the respiratory chain. The immediate electron acceptor for the enzyme in this species is believed to be a menaquinone. Couples the redox reaction to proton translocation (for every two electrons transferred, four hydrogen ions are translocated across the cytoplasmic membrane), and thus conserves the redox energy in a proton gradient. This Anoxybacillus flavithermus (strain DSM 21510 / WK1) protein is NADH-quinone oxidoreductase subunit B.